A 330-amino-acid polypeptide reads, in one-letter code: Beta-ketoacyl-[acyl-carrier-protein] synthase III (330 aa).

Residues Cys-111 and His-249 contribute to the active site. The segment at Gln-250–Arg-254 is ACP-binding. Asn-279 is a catalytic residue.

This sequence belongs to the thiolase-like superfamily. FabH family. As to quaternary structure, homodimer.

It is found in the cytoplasm. It carries out the reaction malonyl-[ACP] + acetyl-CoA + H(+) = 3-oxobutanoyl-[ACP] + CO2 + CoA. It functions in the pathway lipid metabolism; fatty acid biosynthesis. Functionally, catalyzes the condensation reaction of fatty acid synthesis by the addition to an acyl acceptor of two carbons from malonyl-ACP. Catalyzes the first condensation reaction which initiates fatty acid synthesis and may therefore play a role in governing the total rate of fatty acid production. Possesses both acetoacetyl-ACP synthase and acetyl transacylase activities. Its substrate specificity determines the biosynthesis of branched-chain and/or straight-chain of fatty acids. This chain is Beta-ketoacyl-[acyl-carrier-protein] synthase III, found in Pseudomonas aeruginosa (strain LESB58).